A 699-amino-acid polypeptide reads, in one-letter code: Long-chain-fatty-acid--CoA ligase 1 (699 aa).

Met1 bears the N-acetylmethionine mark. Tyr9 is modified (3'-nitrotyrosine). A helical; Signal-anchor for type III membrane protein membrane pass occupies residues 25–45 (LPTNTLMGFGAFAALTTFWYA). The Cytoplasmic segment spans residues 46-699 (TRPKALKPPC…IDELYSTIKI (654 aa)). The residue at position 85 (Tyr85) is a Phosphotyrosine. Tyr86 is modified (3'-nitrotyrosine). Ser136 carries O-linked (GlcNAc) serine glycosylation. An N6-acetyllysine mark is found at Lys208, Lys357, and Lys387. Ser621 carries the post-translational modification Phosphoserine. At Lys633 the chain carries N6-acetyllysine.

Belongs to the ATP-dependent AMP-binding enzyme family. The cofactor is Mg(2+). In terms of tissue distribution, liver, heart, epididymal adipose and to a lesser extent brain, small intestine and lung.

It is found in the mitochondrion outer membrane. Its subcellular location is the peroxisome membrane. The protein localises to the microsome membrane. The protein resides in the endoplasmic reticulum membrane. It carries out the reaction a long-chain fatty acid + ATP + CoA = a long-chain fatty acyl-CoA + AMP + diphosphate. The enzyme catalyses (5Z,8Z,11Z,14Z)-eicosatetraenoate + ATP + CoA = (5Z,8Z,11Z,14Z)-eicosatetraenoyl-CoA + AMP + diphosphate. It catalyses the reaction 3,7,11,15-tetramethylhexadecanoate + ATP + CoA = phytanoyl-CoA + AMP + diphosphate. The catalysed reaction is hexadecanoate + ATP + CoA = hexadecanoyl-CoA + AMP + diphosphate. It carries out the reaction (E)-hexadec-2-enoate + ATP + CoA = (2E)-hexadecenoyl-CoA + AMP + diphosphate. The enzyme catalyses 2,6,10,14-tetramethylpentadecanoate + ATP + CoA = pristanoyl-CoA + AMP + diphosphate. It catalyses the reaction 14,15-epoxy-(5Z,8Z,11Z)-eicosatrienoate + ATP + CoA = 14,15-epoxy-(5Z,8Z,11Z)-eicosatrienoyl-CoA + AMP + diphosphate. The catalysed reaction is 5-hydroxy-(6E,8Z,11Z,14Z)-eicosatetraenoate + ATP + CoA = 5-hydroxy-(6E,8Z,11Z,14Z)-eicosatetraenoyl-CoA + AMP + diphosphate. It carries out the reaction 12-hydroxy-(5Z,8Z,10E,14Z)-eicosatetraenoate + ATP + CoA = 12-hydroxy-(5Z,8Z,10E,14Z)-eicosatetraenoyl-CoA + AMP + diphosphate. The enzyme catalyses 15-hydroxy-(5Z,8Z,11Z,13E)-eicosatetraenoate + ATP + CoA = 15-hydroxy-(5Z,8Z,11Z,13E)-eicosatetraenoyl-CoA + AMP + diphosphate. It catalyses the reaction (9Z)-octadecenoate + ATP + CoA = (9Z)-octadecenoyl-CoA + AMP + diphosphate. With respect to regulation, inhibited at high temperature and by arachidonate. Its function is as follows. Catalyzes the conversion of long-chain fatty acids to their active form acyl-CoAs for both synthesis of cellular lipids, and degradation via beta-oxidation. Preferentially uses palmitoleate, oleate and linoleate. Preferentially activates arachidonate than epoxyeicosatrienoic acids (EETs) or hydroxyeicosatrienoic acids (HETEs). This is Long-chain-fatty-acid--CoA ligase 1 from Rattus norvegicus (Rat).